A 626-amino-acid chain; its full sequence is Methanol dehydrogenase [cytochrome c] subunit 1 (626 aa).

A signal peptide spans 1–27 (MSRFVTSVSALAMLALAPAALSSGAYA). A disulfide bond links C130 and C131. Residues E204 and N288 each contribute to the Ca(2+) site. The active-site Proton acceptor is D330. A disulfide bridge links C413 with C442.

The protein belongs to the bacterial PQQ dehydrogenase family. In terms of assembly, heterotetramer composed of 2 alpha and 2 beta subunits. It depends on pyrroloquinoline quinone as a cofactor. Ca(2+) serves as cofactor.

Its subcellular location is the cell inner membrane. It carries out the reaction 2 Fe(III)-[cytochrome cL] + a primary alcohol = 2 Fe(II)-[cytochrome cL] + an aldehyde + 2 H(+). In terms of biological role, catalyzes the oxidation of primary alcohols including methanol. In Methylorubrum extorquens (strain ATCC 14718 / DSM 1338 / JCM 2805 / NCIMB 9133 / AM1) (Methylobacterium extorquens), this protein is Methanol dehydrogenase [cytochrome c] subunit 1 (moxF).